The sequence spans 408 residues: Glyceraldehyde-3-phosphate dehydrogenase, testis-specific (408 aa).

The testis-specific N-terminal extension stretch occupies residues 1–73 (MSKRDIVLTN…TPPPKMVSVA (73 aa)). The disordered stretch occupies residues 19-68 (QPCPVTRAPPPPEPKAEVEPQPQPEPTPVREEIKPPPPPLPPHPATPPPK). Positions 53 to 68 (PPPPPLPPHPATPPPK) are enriched in pro residues. NAD(+) is bound by residues 85–86 (RI), D106, K151, Y173, and S193. Residues 223-225 (SCT), T254, 283-284 (TG), and R306 each bind D-glyceraldehyde 3-phosphate. C224 functions as the Nucleophile in the catalytic mechanism. N388 is a binding site for NAD(+).

Belongs to the glyceraldehyde-3-phosphate dehydrogenase family. As to quaternary structure, homotetramer. Interacts with ARRB2; the interaction is detected in the nucleus upon OR1D2 stimulation. As to expression, testis specific.

The protein resides in the cytoplasm. It carries out the reaction D-glyceraldehyde 3-phosphate + phosphate + NAD(+) = (2R)-3-phospho-glyceroyl phosphate + NADH + H(+). It participates in carbohydrate degradation; glycolysis; pyruvate from D-glyceraldehyde 3-phosphate: step 1/5. Functionally, may play an important role in regulating the switch between different pathways for energy production during spermiogenesis and in the spermatozoon. Required for sperm motility and male fertility. The protein is Glyceraldehyde-3-phosphate dehydrogenase, testis-specific (GAPDHS) of Homo sapiens (Human).